The primary structure comprises 203 residues: Translation initiation factor IF-3 (203 aa).

A disordered region spans residues 168–203; it reads QLSPKKKESATKKPATPKPATPAAVKAEKPAGDNEE. Residues 193-203 are compositionally biased toward basic and acidic residues; it reads KAEKPAGDNEE.

It belongs to the IF-3 family. In terms of assembly, monomer.

It localises to the cytoplasm. Its function is as follows. IF-3 binds to the 30S ribosomal subunit and shifts the equilibrium between 70S ribosomes and their 50S and 30S subunits in favor of the free subunits, thus enhancing the availability of 30S subunits on which protein synthesis initiation begins. In Bacteroides fragilis (strain ATCC 25285 / DSM 2151 / CCUG 4856 / JCM 11019 / LMG 10263 / NCTC 9343 / Onslow / VPI 2553 / EN-2), this protein is Translation initiation factor IF-3.